Here is a 346-residue protein sequence, read N- to C-terminus: Aspartate-semialdehyde dehydrogenase (346 aa).

NADP(+) contacts are provided by residues 12 to 15 (SGAV) and 40 to 41 (RS). Arginine 101 is a phosphate binding site. Cysteine 131 acts as the Acyl-thioester intermediate in catalysis. A substrate-binding site is contributed by glutamine 158. 161–162 (SG) is a binding site for NADP(+). Lysine 225 provides a ligand contact to phosphate. Substrate is bound at residue arginine 246. Catalysis depends on histidine 253, which acts as the Proton acceptor. Glutamine 326 contacts NADP(+).

This sequence belongs to the aspartate-semialdehyde dehydrogenase family. In terms of assembly, homodimer.

It catalyses the reaction L-aspartate 4-semialdehyde + phosphate + NADP(+) = 4-phospho-L-aspartate + NADPH + H(+). It participates in amino-acid biosynthesis; L-lysine biosynthesis via DAP pathway; (S)-tetrahydrodipicolinate from L-aspartate: step 2/4. Its pathway is amino-acid biosynthesis; L-methionine biosynthesis via de novo pathway; L-homoserine from L-aspartate: step 2/3. It functions in the pathway amino-acid biosynthesis; L-threonine biosynthesis; L-threonine from L-aspartate: step 2/5. Catalyzes the NADPH-dependent formation of L-aspartate-semialdehyde (L-ASA) by the reductive dephosphorylation of L-aspartyl-4-phosphate. This is Aspartate-semialdehyde dehydrogenase from Helicobacter pylori (strain J99 / ATCC 700824) (Campylobacter pylori J99).